The chain runs to 253 residues: Giant extracellular hemoglobin linker 1 chain (253 aa).

Residues 89–131 (HHCDDDHLSCKDVAFTCIGHNLVCDGHKDCLNGHDEDEETCSI) form the LDL-receptor class A domain. Disulfide bonds link C91/C105, C98/C118, and C112/C129.

Disulfide-linked dimer of identical chains. A model is proposed for the subunit structure of the Tylorrhynchus hemoglobin, consisting of 216 polypeptide chains, 192 heme-containing chains, and 24 linker chains.

Its function is as follows. Acts as a linker for the assembly of heme-containing chains in the construction of giant hemoglobin. This Tylorrhynchus heterochetus (Japanese palolo worm) protein is Giant extracellular hemoglobin linker 1 chain.